A 303-amino-acid polypeptide reads, in one-letter code: UDP-3-O-acyl-N-acetylglucosamine deacetylase (303 aa).

Zn(2+)-binding residues include His78, His237, and Asp241. His264 functions as the Proton donor in the catalytic mechanism.

It belongs to the LpxC family. Zn(2+) serves as cofactor.

It carries out the reaction a UDP-3-O-[(3R)-3-hydroxyacyl]-N-acetyl-alpha-D-glucosamine + H2O = a UDP-3-O-[(3R)-3-hydroxyacyl]-alpha-D-glucosamine + acetate. The protein operates within glycolipid biosynthesis; lipid IV(A) biosynthesis; lipid IV(A) from (3R)-3-hydroxytetradecanoyl-[acyl-carrier-protein] and UDP-N-acetyl-alpha-D-glucosamine: step 2/6. In terms of biological role, catalyzes the hydrolysis of UDP-3-O-myristoyl-N-acetylglucosamine to form UDP-3-O-myristoylglucosamine and acetate, the committed step in lipid A biosynthesis. This Cellvibrio japonicus (strain Ueda107) (Pseudomonas fluorescens subsp. cellulosa) protein is UDP-3-O-acyl-N-acetylglucosamine deacetylase.